The primary structure comprises 495 residues: Glycerol kinase (495 aa).

Residue Thr11 coordinates ADP. Positions 11, 12, and 13 each coordinate ATP. Thr11 contributes to the sn-glycerol 3-phosphate binding site. Position 15 (Arg15) interacts with ADP. Residues Arg81, Glu82, Tyr133, and Asp242 each contribute to the sn-glycerol 3-phosphate site. 5 residues coordinate glycerol: Arg81, Glu82, Tyr133, Asp242, and Gln243. Positions 264 and 307 each coordinate ADP. 4 residues coordinate ATP: Thr264, Gly307, Gln311, and Gly408. Gly408 and Asn412 together coordinate ADP.

This sequence belongs to the FGGY kinase family.

The enzyme catalyses glycerol + ATP = sn-glycerol 3-phosphate + ADP + H(+). The protein operates within polyol metabolism; glycerol degradation via glycerol kinase pathway; sn-glycerol 3-phosphate from glycerol: step 1/1. Inhibited by fructose 1,6-bisphosphate (FBP). In terms of biological role, key enzyme in the regulation of glycerol uptake and metabolism. Catalyzes the phosphorylation of glycerol to yield sn-glycerol 3-phosphate. The chain is Glycerol kinase from Acinetobacter baylyi (strain ATCC 33305 / BD413 / ADP1).